The primary structure comprises 317 residues: tRNA pseudouridine synthase B (317 aa).

Asp-47 acts as the Nucleophile in catalysis.

Belongs to the pseudouridine synthase TruB family. Type 1 subfamily.

The enzyme catalyses uridine(55) in tRNA = pseudouridine(55) in tRNA. Functionally, responsible for synthesis of pseudouridine from uracil-55 in the psi GC loop of transfer RNAs. The protein is tRNA pseudouridine synthase B of Shewanella denitrificans (strain OS217 / ATCC BAA-1090 / DSM 15013).